We begin with the raw amino-acid sequence, 159 residues long: Protein-export protein SecB (159 aa).

This sequence belongs to the SecB family. Homotetramer, a dimer of dimers. One homotetramer interacts with 1 SecA dimer.

It is found in the cytoplasm. In terms of biological role, one of the proteins required for the normal export of preproteins out of the cell cytoplasm. It is a molecular chaperone that binds to a subset of precursor proteins, maintaining them in a translocation-competent state. It also specifically binds to its receptor SecA. This Bartonella bacilliformis (strain ATCC 35685 / KC583 / Herrer 020/F12,63) protein is Protein-export protein SecB.